Reading from the N-terminus, the 335-residue chain is Beta-ketoacyl-[acyl-carrier-protein] synthase III (335 aa).

Residues Cys-119 and His-261 contribute to the active site. Positions 262–266 are ACP-binding; it reads QANQR. Asn-291 is an active-site residue.

Belongs to the thiolase-like superfamily. FabH family. Homodimer.

It is found in the cytoplasm. It catalyses the reaction malonyl-[ACP] + acetyl-CoA + H(+) = 3-oxobutanoyl-[ACP] + CO2 + CoA. Its pathway is lipid metabolism; fatty acid biosynthesis. Its function is as follows. Catalyzes the condensation reaction of fatty acid synthesis by the addition to an acyl acceptor of two carbons from malonyl-ACP. Catalyzes the first condensation reaction which initiates fatty acid synthesis and may therefore play a role in governing the total rate of fatty acid production. Possesses both acetoacetyl-ACP synthase and acetyl transacylase activities. Its substrate specificity determines the biosynthesis of branched-chain and/or straight-chain of fatty acids. The chain is Beta-ketoacyl-[acyl-carrier-protein] synthase III from Prochlorococcus marinus (strain MIT 9215).